The chain runs to 118 residues: Large ribosomal subunit protein uL18 (118 aa).

The protein belongs to the universal ribosomal protein uL18 family. In terms of assembly, part of the 50S ribosomal subunit; part of the 5S rRNA/L5/L18/L25 subcomplex. Contacts the 5S and 23S rRNAs.

This is one of the proteins that bind and probably mediate the attachment of the 5S RNA into the large ribosomal subunit, where it forms part of the central protuberance. The chain is Large ribosomal subunit protein uL18 from Sulfurimonas denitrificans (strain ATCC 33889 / DSM 1251) (Thiomicrospira denitrificans (strain ATCC 33889 / DSM 1251)).